We begin with the raw amino-acid sequence, 1067 residues long: Hemoglobin and hemoglobin-haptoglobin-binding protein B (1067 aa).

The N-terminal stretch at 1-24 (MTNFKFSLLACSIAFALNASTAYA) is a signal peptide. Tandem repeats lie at residues 26 to 29 (QPTN), 30 to 33 (QPTN), 34 to 37 (QPTN), 38 to 41 (QPTN), 42 to 45 (QPTN), and 46 to 49 (QPTN). Positions 26 to 49 (QPTNQPTNQPTNQPTNQPTNQPTN) are 6 X 4 AA tandem repeats of Q-P-T-N. The segment covering 26 to 51 (QPTNQPTNQPTNQPTNQPTNQPTNQN) has biased composition (low complexity). The disordered stretch occupies residues 26 to 53 (QPTNQPTNQPTNQPTNQPTNQPTNQNSN). A TonB box motif is present at residues 59 to 66 (EQINVSGS). Residues 71–196 (NIKEKKVGET…LGGSVIFETK (126 aa)) form the TBDR plug domain. Residues 204-1067 (DKDYYLSYKR…NYRMSVQFEF (864 aa)) form the TBDR beta-barrel domain. Residues 1050-1067 (NRFYAPGRNYRMSVQFEF) carry the TonB C-terminal box motif.

The protein belongs to the TonB-dependent receptor family. Hemoglobin/haptoglobin binding protein subfamily.

The protein localises to the cell outer membrane. Its function is as follows. Acts as a receptor for hemoglobin or the hemoglobin/haptoglobin complex of the human host and is required for heme uptake. In Haemophilus influenzae, this protein is Hemoglobin and hemoglobin-haptoglobin-binding protein B (hgbB).